The chain runs to 245 residues: 8-amino-3,8-dideoxy-manno-octulosonate cytidylyltransferase (245 aa).

This sequence belongs to the KdsB family.

Its subcellular location is the cytoplasm. The enzyme catalyses 8-amino-3,8-dideoxy-alpha-D-manno-octulosonate + CTP = CMP-8-amino-3,8-dideoxy-alpha-D-manno-oct-2-ulosonate + diphosphate. Its pathway is bacterial outer membrane biogenesis; lipopolysaccharide biosynthesis. In terms of biological role, activates KDO8N (a required 8-carbon sugar) for incorporation into bacterial lipopolysaccharide in the Shewanella genus. The sequence is that of 8-amino-3,8-dideoxy-manno-octulosonate cytidylyltransferase from Shewanella sediminis (strain HAW-EB3).